The chain runs to 74 residues: Transcription attenuation protein MtrB (74 aa).

This sequence belongs to the MtrB family. Oligomer of 11 identical subunits arranged in doughnut-like structure.

In terms of biological role, required for transcription attenuation control in the Trp operon. This trans-acting factor seems to recognize a 10 bases nucleotide sequence in the Trp leader transcript causing transcription termination. Binds the leader RNA only in presence of L-tryptophan. The chain is Transcription attenuation protein MtrB (mtrB) from Oceanobacillus iheyensis (strain DSM 14371 / CIP 107618 / JCM 11309 / KCTC 3954 / HTE831).